The chain runs to 88 residues: Small ribosomal subunit protein bS20 (88 aa).

This sequence belongs to the bacterial ribosomal protein bS20 family.

Binds directly to 16S ribosomal RNA. The polypeptide is Small ribosomal subunit protein bS20 (Clostridioides difficile (strain 630) (Peptoclostridium difficile)).